Here is a 364-residue protein sequence, read N- to C-terminus: BOLA class I histocompatibility antigen, alpha chain BL3-7 (364 aa).

Positions 1-27 (MRVMRVMRPRTLLLLLSGVLVLTETLA) are cleaved as a signal peptide. The tract at residues 28 to 117 (GSHSLRYFYT…LRGYYNQSET (90 aa)) is alpha-1. Over 28 to 310 (GSHSLRYFYT…WEPPQTSFLI (283 aa)) the chain is Extracellular. N113 carries an N-linked (GlcNAc...) asparagine glycan. Residues 118–209 (GSHNIQAMYG…ENGKDTLLRA (92 aa)) are alpha-2. Cystine bridges form between C128/C191 and C230/C286. Positions 210-301 (DPPKAHVTHH…GLQEPLTLRW (92 aa)) are alpha-3. The region spanning 212 to 298 (PKAHVTHHSI…QHEGLQEPLT (87 aa)) is the Ig-like C1-type domain. Residues 302–310 (EPPQTSFLI) form a connecting peptide region. A helical membrane pass occupies residues 311–331 (MGIIVGLVLLVVALVAGAVIW). Topologically, residues 332–364 (RKKRSGEKGRIYTQAASSDSAQGSDVSLTVPKV) are cytoplasmic. Residues S355 and S358 each carry the phosphoserine modification.

It belongs to the MHC class I family. Heterodimer of an alpha chain and a beta chain (beta-2-microglobulin).

It localises to the membrane. Its function is as follows. Involved in the presentation of foreign antigens to the immune system. This chain is BOLA class I histocompatibility antigen, alpha chain BL3-7, found in Bos taurus (Bovine).